The chain runs to 588 residues: L-fucose isomerase (588 aa).

Catalysis depends on proton acceptor residues E335 and D359. Mn(2+)-binding residues include E335, D359, and H525.

It belongs to the L-fucose isomerase family. Requires Mn(2+) as cofactor.

It is found in the cytoplasm. It catalyses the reaction L-fucose = L-fuculose. The protein operates within carbohydrate degradation; L-fucose degradation; L-lactaldehyde and glycerone phosphate from L-fucose: step 1/3. Functionally, converts the aldose L-fucose into the corresponding ketose L-fuculose. This Streptococcus pneumoniae (strain ATCC 700669 / Spain 23F-1) protein is L-fucose isomerase.